Here is a 335-residue protein sequence, read N- to C-terminus: Glycerol-3-phosphate dehydrogenase [NAD(P)+] (335 aa).

Residues S15, Y16, H36, and K110 each coordinate NADPH. K110, G139, and T141 together coordinate sn-glycerol 3-phosphate. Residue A143 participates in NADPH binding. K195, D248, S258, R259, and N260 together coordinate sn-glycerol 3-phosphate. The active-site Proton acceptor is K195. R259 lines the NADPH pocket. NADPH is bound by residues V283 and E285.

This sequence belongs to the NAD-dependent glycerol-3-phosphate dehydrogenase family.

It is found in the cytoplasm. It catalyses the reaction sn-glycerol 3-phosphate + NAD(+) = dihydroxyacetone phosphate + NADH + H(+). It carries out the reaction sn-glycerol 3-phosphate + NADP(+) = dihydroxyacetone phosphate + NADPH + H(+). It participates in membrane lipid metabolism; glycerophospholipid metabolism. Catalyzes the reduction of the glycolytic intermediate dihydroxyacetone phosphate (DHAP) to sn-glycerol 3-phosphate (G3P), the key precursor for phospholipid synthesis. The polypeptide is Glycerol-3-phosphate dehydrogenase [NAD(P)+] (Mannheimia succiniciproducens (strain KCTC 0769BP / MBEL55E)).